Reading from the N-terminus, the 95-residue chain is Small ribosomal subunit protein bS6 (95 aa).

Belongs to the bacterial ribosomal protein bS6 family.

In terms of biological role, binds together with bS18 to 16S ribosomal RNA. The protein is Small ribosomal subunit protein bS6 of Acholeplasma laidlawii (strain PG-8A).